We begin with the raw amino-acid sequence, 181 residues long: ATP synthase subunit b (181 aa).

A helical membrane pass occupies residues 12-32 (LPAVYDIVWSAVVFVVLLVVI).

Belongs to the ATPase B chain family. In terms of assembly, F-type ATPases have 2 components, F(1) - the catalytic core - and F(0) - the membrane proton channel. F(1) has five subunits: alpha(3), beta(3), gamma(1), delta(1), epsilon(1). F(0) has three main subunits: a(1), b(2) and c(10-14). The alpha and beta chains form an alternating ring which encloses part of the gamma chain. F(1) is attached to F(0) by a central stalk formed by the gamma and epsilon chains, while a peripheral stalk is formed by the delta and b chains.

It localises to the cell membrane. Its function is as follows. F(1)F(0) ATP synthase produces ATP from ADP in the presence of a proton or sodium gradient. F-type ATPases consist of two structural domains, F(1) containing the extramembraneous catalytic core and F(0) containing the membrane proton channel, linked together by a central stalk and a peripheral stalk. During catalysis, ATP synthesis in the catalytic domain of F(1) is coupled via a rotary mechanism of the central stalk subunits to proton translocation. Functionally, component of the F(0) channel, it forms part of the peripheral stalk, linking F(1) to F(0). This Clavibacter sepedonicus (Clavibacter michiganensis subsp. sepedonicus) protein is ATP synthase subunit b.